The sequence spans 141 residues: ATP synthase epsilon chain (141 aa).

The protein belongs to the ATPase epsilon chain family. As to quaternary structure, F-type ATPases have 2 components, CF(1) - the catalytic core - and CF(0) - the membrane proton channel. CF(1) has five subunits: alpha(3), beta(3), gamma(1), delta(1), epsilon(1). CF(0) has three main subunits: a, b and c.

The protein localises to the cell inner membrane. Produces ATP from ADP in the presence of a proton gradient across the membrane. This is ATP synthase epsilon chain from Halorhodospira halophila (strain DSM 244 / SL1) (Ectothiorhodospira halophila (strain DSM 244 / SL1)).